The chain runs to 218 residues: MEGGGRRVFSNYDLQQVTSSSTTIQENMNFLVPFEETNVLTFFSSSSSSSLSSPSFPIHNSSSTTTTHAPLGFSNNLQGGGPLGSKVVNDDQENFGGGTNNDAHSNSWWRSNSGSGDMKNKVKIRRKLREPRFCFQTKSDVDVLDDGYKWRKYGQKVVKNSLHPRSYYRCTHNNCRVKKRVERLSEDCRMVITTYEGRHNHIPSDDSTSPDHDCLSSF.

Positions 49 to 63 (SSLSSPSFPIHNSSS) are enriched in low complexity. Disordered regions lie at residues 49–120 (SSLS…DMKN) and 199–218 (HNHIPSDDSTSPDHDCLSSF). Positions 64–77 (TTTTHAPLGFSNNL) are enriched in polar residues. The segment covering 105-116 (SNSWWRSNSGSG) has biased composition (low complexity). A DNA-binding region (WRKY) is located at residues 139-204 (SDVDVLDDGY…YEGRHNHIPS (66 aa)).

The protein belongs to the WRKY group II-c family.

Its subcellular location is the nucleus. Its function is as follows. Transcription factor. Interacts specifically with the W box (5'-(T)TGAC[CT]-3'), a frequently occurring elicitor-responsive cis-acting element. This Arabidopsis thaliana (Mouse-ear cress) protein is Probable WRKY transcription factor 12 (WRKY12).